The chain runs to 483 residues: UDP-glycosyltransferase 85C1 (483 aa).

Residues Ser304, 360–361 (WC), 378–386 (HCGWGSIIE), and 400–403 (IGDQ) contribute to the UDP-alpha-D-glucose site.

Belongs to the UDP-glycosyltransferase family.

Its function is as follows. May glycosylate diterpenes or flavonols in leaves. The sequence is that of UDP-glycosyltransferase 85C1 from Stevia rebaudiana (Stevia).